The primary structure comprises 226 residues: MGDKTWLPFPVVLLAALLLPRAAGFTPSLDSDFTFTLPAGQKECFYQPMPLKASLEIEYQVLDGAGLDIDFHLASPEGKTLVFEQRKSDGVHTIETEVGDYMFCFDNTFSTISEKVIFFELILDNMGEQEQEQEDWKKYITGTDMLDMKLEDILESINSIKSRLSKSGHIQTLLRAFEARDRNIQESNFDRVNFWSMVNLVVMVVVSAIQVYMLKSLFEDKRKSRT.

The signal sequence occupies residues 1 to 24 (MGDKTWLPFPVVLLAALLLPRAAG). Over 25-193 (FTPSLDSDFT…IQESNFDRVN (169 aa)) the chain is Lumenal. Residues 42-123 (KECFYQPMPL…EKVIFFELIL (82 aa)) enclose the GOLD domain. A helical transmembrane segment spans residues 194-214 (FWSMVNLVVMVVVSAIQVYML). Topologically, residues 215-226 (KSLFEDKRKSRT) are cytoplasmic. Positions 217–218 (LF) match the Mediates export from ER motif.

The protein belongs to the EMP24/GP25L family. Interacts with TMED9 and TMED10.

The protein resides in the endoplasmic reticulum membrane. The protein localises to the golgi apparatus. It localises to the cis-Golgi network membrane. It is found in the endoplasmic reticulum-Golgi intermediate compartment membrane. In terms of biological role, potential role in vesicular protein trafficking, mainly in the early secretory pathway. Required for the maintenance of the Golgi apparatus; involved in protein exchange between Golgi stacks during assembly. Probably not required for COPI-vesicle-mediated retrograde transport. The protein is Transmembrane emp24 domain-containing protein 5 (TMED5) of Bos taurus (Bovine).